We begin with the raw amino-acid sequence, 473 residues long: Probable transporter MCH2 (473 aa).

Topologically, residues 1 to 37 (MSEERHEDHHRDVENKLNLNGKDDINGNTSISIEVPD) are cytoplasmic. Residues 38 to 58 (GGYGWFILLAFILYNFSTWGA) form a helical membrane-spanning segment. Over 59-83 (NSGYAIYLAHYLENNTFAGGSKLDY) the chain is Extracellular. N-linked (GlcNAc...) asparagine glycosylation occurs at asparagine 72. The helical transmembrane segment at 84–105 (ASIGGLAFSCGLFFAPVITWLY) threads the bilayer. Over 106-111 (HIFSIQ) the chain is Cytoplasmic. A helical transmembrane segment spans residues 112–135 (FIIGLGILFQGAALLLAAFSVTLW). The Extracellular portion of the chain corresponds to 136–141 (EIYLTQ). Residues 142-163 (GVLIGFGLAFIFIPSVTLIPLW) traverse the membrane as a helical segment. The Cytoplasmic segment spans residues 164-169 (FRNKRS). A helical membrane pass occupies residues 170–186 (LASGIGTAGSGLGGIVF). Over 187–200 (NLGMQSILQKRGVK) the chain is Extracellular. The chain crosses the membrane as a helical span at residues 201 to 220 (WALIAQCIICTSLSTIALML). The Cytoplasmic portion of the chain corresponds to 221 to 243 (TRTTHQGLRQHKRSYKFELLDYD). A helical transmembrane segment spans residues 244–268 (VLSNFAVWLLFGFVSFAMLGYVVLL). The Extracellular segment spans residues 269–286 (YSLSDFTVSLGYTSKQGS). A helical transmembrane segment spans residues 287-304 (YVSCMVSVGSLLGRPIVG). Residues 305–312 (HIADKYGS) are Cytoplasmic-facing. The chain crosses the membrane as a helical span at residues 313–332 (LTVGMILHLVMAILCWAMWI). Topologically, residues 333–342 (PCKNLATAIA) are extracellular. The chain crosses the membrane as a helical span at residues 343 to 362 (FGLLVGSIMGTIWPTIASIV). Over 363–370 (TRIVGLQK) the chain is Cytoplasmic. Residues 371 to 394 (LPGTFGSTWIFMAAFALVAPIIGL) traverse the membrane as a helical segment. Over 395–408 (ELRSTDTNGNDYYR) the chain is Extracellular. A helical membrane pass occupies residues 409–433 (TAIFVGFAYFGVSLCQWLLRGFIIA). The Cytoplasmic portion of the chain corresponds to 434–473 (RDEIAVREAYSADQNELHLNVKLSHMSKCLFRYKQLPRRV).

The protein belongs to the major facilitator superfamily. Monocarboxylate porter (TC 2.A.1.13) family.

Its subcellular location is the membrane. Probable transporter. Does not act in the transport of monocarboxylic acids across the plasma membrane. This is Probable transporter MCH2 (MCH2) from Saccharomyces cerevisiae (strain ATCC 204508 / S288c) (Baker's yeast).